A 163-amino-acid polypeptide reads, in one-letter code: S-fimbrial adhesin protein SfaS (163 aa).

The signal sequence occupies residues 1 to 22 (MKLKAIILATGLINCIAFSAQA). Cysteines 38 and 75 form a disulfide. Residues 138–144 (KARAVSK) form an involved in sialic acid binding region.

This sequence belongs to the fimbrial protein family.

It is found in the fimbrium. Its function is as follows. Fimbriae (also called pili), polar filaments radiating from the surface of the bacterium to a length of 0.5-1.5 micrometers and numbering 100-300 per cell, enable bacteria to colonize the epithelium of specific host organs. A minor fimbrial subunit, this protein is necessary for full expression of S-specific binding. S-fimbrial adhesins enable pathogenic E.coli causing urinary-tract infections or newborn meningitis to attach to glycoproteins terminating with alpha-sialic acid-(2-3)-beta-Gal. This protein binds to the alpha-sialic acid-(2-3)-beta-Gal and is thus responsible for erythrocyte recognition and hemagglutination. The protein is S-fimbrial adhesin protein SfaS (sfaS) of Escherichia coli O6:K15:H31 (strain 536 / UPEC).